The primary structure comprises 220 residues: ATP synthase subunit beta, chloroplastic (220 aa).

Belongs to the ATPase alpha/beta chains family. F-type ATPases have 2 components, CF(1) - the catalytic core - and CF(0) - the membrane proton channel. CF(1) has five subunits: alpha(3), beta(3), gamma(1), delta(1), epsilon(1). CF(0) has four main subunits: a(1), b(1), b'(1) and c(9-12).

The protein localises to the plastid. It is found in the chloroplast thylakoid membrane. The enzyme catalyses ATP + H2O + 4 H(+)(in) = ADP + phosphate + 5 H(+)(out). In terms of biological role, produces ATP from ADP in the presence of a proton gradient across the membrane. The catalytic sites are hosted primarily by the beta subunits. The chain is ATP synthase subunit beta, chloroplastic (atpB) from Osmundastrum cinnamomeum (Cinnamon fern).